The primary structure comprises 473 residues: Photosystem II CP43 reaction center protein (473 aa).

Residues 1–14 (MKTLYSLRRFYHVE) constitute a propeptide that is removed on maturation. Residue Thr15 is modified to N-acetylthreonine. Thr15 is modified (phosphothreonine). The next 5 membrane-spanning stretches (helical) occupy residues 69-93 (LFEV…PHLA), 134-155 (LLGP…KDRN), 178-200 (KALY…RKIA), 255-275 (KPFA…LSYS), and 291-312 (WFNN…ASQA). A [CaMn4O5] cluster-binding site is contributed by Glu367. The helical transmembrane segment at 447–471 (RARAAAAGFEKGIDRDFEPVLSMTP) threads the bilayer.

It belongs to the PsbB/PsbC family. PsbC subfamily. As to quaternary structure, PSII is composed of 1 copy each of membrane proteins PsbA, PsbB, PsbC, PsbD, PsbE, PsbF, PsbH, PsbI, PsbJ, PsbK, PsbL, PsbM, PsbT, PsbX, PsbY, PsbZ, Psb30/Ycf12, at least 3 peripheral proteins of the oxygen-evolving complex and a large number of cofactors. It forms dimeric complexes. Requires Binds multiple chlorophylls and provides some of the ligands for the Ca-4Mn-5O cluster of the oxygen-evolving complex. It may also provide a ligand for a Cl- that is required for oxygen evolution. PSII binds additional chlorophylls, carotenoids and specific lipids. as cofactor.

The protein resides in the plastid membrane. In terms of biological role, one of the components of the core complex of photosystem II (PSII). It binds chlorophyll and helps catalyze the primary light-induced photochemical processes of PSII. PSII is a light-driven water:plastoquinone oxidoreductase, using light energy to abstract electrons from H(2)O, generating O(2) and a proton gradient subsequently used for ATP formation. In Cuscuta exaltata (Tall dodder), this protein is Photosystem II CP43 reaction center protein.